Here is a 199-residue protein sequence, read N- to C-terminus: MTTLTAQQIACVYAWLAQLFSRELDDEQLTQIASAQMAEWFSLLKNEPPLTAAVNELENRIATLTVRDDARLELAADFCGLFLMTDKQAALPYASAYKQDEQEIKRLLVEAGMETSGNFNEPADHLAIYLELLSHLHFSLGEGTVPARRIDSLRQKTLTALWQWLPEFVARCRQYDSFGFYAALSQLLLVLVECDHQNR.

Belongs to the TorD/DmsD family. TorD subfamily.

It is found in the cytoplasm. In terms of biological role, involved in the biogenesis of TorA. Acts on TorA before the insertion of the molybdenum cofactor and, as a result, probably favors a conformation of the apoenzyme that is competent for acquiring the cofactor. The chain is Chaperone protein TorD from Escherichia coli (strain K12 / MC4100 / BW2952).